The following is a 256-amino-acid chain: Cysteine-rich repeat secretory protein 29 (256 aa).

The N-terminal stretch at Met1–Ser26 is a signal peptide. 2 Gnk2-homologous domains span residues Tyr33–Ser136 and Tyr142–Phe253.

The protein belongs to the cysteine-rich repeat secretory protein family.

Its subcellular location is the secreted. This chain is Cysteine-rich repeat secretory protein 29 (CRRSP29), found in Arabidopsis thaliana (Mouse-ear cress).